The sequence spans 206 residues: Small ribosomal subunit protein uS4 (206 aa).

The region spanning 96 to 157 is the S4 RNA-binding domain; that stretch reads CRLDNVVYRM…KCRNQLRIAQ (62 aa).

It belongs to the universal ribosomal protein uS4 family. In terms of assembly, part of the 30S ribosomal subunit. Contacts protein S5. The interaction surface between S4 and S5 is involved in control of translational fidelity.

Functionally, one of the primary rRNA binding proteins, it binds directly to 16S rRNA where it nucleates assembly of the body of the 30S subunit. In terms of biological role, with S5 and S12 plays an important role in translational accuracy. This chain is Small ribosomal subunit protein uS4, found in Stutzerimonas stutzeri (strain A1501) (Pseudomonas stutzeri).